The chain runs to 249 residues: 3-deoxy-manno-octulosonate cytidylyltransferase (249 aa).

Belongs to the KdsB family.

It localises to the cytoplasm. The catalysed reaction is 3-deoxy-alpha-D-manno-oct-2-ulosonate + CTP = CMP-3-deoxy-beta-D-manno-octulosonate + diphosphate. It participates in nucleotide-sugar biosynthesis; CMP-3-deoxy-D-manno-octulosonate biosynthesis; CMP-3-deoxy-D-manno-octulosonate from 3-deoxy-D-manno-octulosonate and CTP: step 1/1. Its pathway is bacterial outer membrane biogenesis; lipopolysaccharide biosynthesis. Activates KDO (a required 8-carbon sugar) for incorporation into bacterial lipopolysaccharide in Gram-negative bacteria. In Aliivibrio fischeri (strain ATCC 700601 / ES114) (Vibrio fischeri), this protein is 3-deoxy-manno-octulosonate cytidylyltransferase.